A 100-amino-acid polypeptide reads, in one-letter code: Large ribosomal subunit protein bL21 (100 aa).

Belongs to the bacterial ribosomal protein bL21 family. In terms of assembly, part of the 50S ribosomal subunit. Contacts protein L20.

This protein binds to 23S rRNA in the presence of protein L20. The polypeptide is Large ribosomal subunit protein bL21 (Mycoplasmoides gallisepticum (strain R(low / passage 15 / clone 2)) (Mycoplasma gallisepticum)).